The following is a 72-amino-acid chain: Large ribosomal subunit protein bL31 (72 aa).

Zn(2+) is bound by residues cysteine 16, cysteine 18, cysteine 38, and cysteine 41.

Belongs to the bacterial ribosomal protein bL31 family. Type A subfamily. In terms of assembly, part of the 50S ribosomal subunit. The cofactor is Zn(2+).

Binds the 23S rRNA. This chain is Large ribosomal subunit protein bL31, found in Azoarcus sp. (strain BH72).